The following is a 214-amino-acid chain: External core antigen (214 aa).

Positions 1–19 (MQLFHLCLIISCTCPTVQA) are cleaved as a signal peptide. The interval 25–27 (GWL) is HBEAG. Residues 165–214 (NAPILSTLPETTVVRRRDRGRSPRRRTPSPRRRRSQSPRRRRSQSRESQC) are disordered. Positions 178-207 (VRRRDRGRSPRRRTPSPRRRRSQSPRRRRS) are enriched in basic residues. Residues 186–192 (SPRRRTP) form a 1; half-length repeat. A 3 X 8 AA repeats of S-P-R-R-R-R-S-Q region spans residues 186-208 (SPRRRTPSPRRRRSQSPRRRRSQ). A propeptide spanning residues 186-214 (SPRRRTPSPRRRRSQSPRRRRSQSRESQC) is cleaved from the precursor. Repeat copies occupy residues 193 to 200 (SPRRRRSQ) and 201 to 208 (SPRRRRSQ).

The protein belongs to the orthohepadnavirus precore antigen family. In terms of assembly, homodimerizes. Phosphorylated. In terms of processing, cleaved by host furin.

Its subcellular location is the secreted. It is found in the host nucleus. In terms of biological role, may regulate immune response to the intracellular capsid in acting as a T-cell tolerogen, by having an immunoregulatory effect which prevents destruction of infected cells by cytotoxic T-cells. This immune regulation may predispose to chronicity during perinatal infections and prevent severe liver injury during adult infections. The sequence is that of External core antigen from Homo sapiens (Human).